A 597-amino-acid chain; its full sequence is Zinc finger CCCH domain-containing protein 29 (597 aa).

2 ANK repeats span residues 76-106 (EERTPLMVAAMYGSMEVLNYIIATGRSDVNR) and 111-143 (EKVTALHCAVSGCSVSIVEIIKILLDASASPNC). 2 consecutive C3H1-type zinc fingers follow at residues 254-281 (PYTCVPCPEFRKGSCPKGDSCEYAHGVF) and 289-313 (QYRTRLCKDETGCARRVCFFAHRRD). Residues 320–337 (ASTGSAMVSPRSSNQSPE) are compositionally biased toward polar residues. Residues 320–341 (ASTGSAMVSPRSSNQSPEMSVM) form a disordered region.

As to expression, expressed in roots and anthers.

The protein localises to the nucleus. Involved in salt stress response. May positively modulate plant tolerance to salt stress. The chain is Zinc finger CCCH domain-containing protein 29 from Arabidopsis thaliana (Mouse-ear cress).